The primary structure comprises 626 residues: Chaperone protein HtpG (626 aa).

An a; substrate-binding region spans residues 1–341; it reads MAKKEFKAES…SEDLSLNISR (341 aa). The b stretch occupies residues 342-552; sequence EMLQHDRQLK…DGEVTIEMEK (211 aa). Residues 553–626 form a c region; it reads ILNAMPDSQN…FTNNICKVMV (74 aa).

It belongs to the heat shock protein 90 family. In terms of assembly, homodimer.

The protein resides in the cytoplasm. Molecular chaperone. Has ATPase activity. This is Chaperone protein HtpG from Bacillus subtilis (strain 168).